A 499-amino-acid polypeptide reads, in one-letter code: Alpha-internexin (499 aa).

Residues 1-87 are head; that stretch reads MSFGSEHYLC…SQAAARTNEY (87 aa). Serine 72 carries the post-translational modification Phosphoserine. The segment at 88–129 is coil 1A; sequence KIIRTNEKEQLQGLNDRFAVFIEKVHQLETQNRALEAELAAL. In terms of domain architecture, IF rod spans 94–407; that stretch reads EKEQLQGLND…KLLEGEETRF (314 aa). The linker 1 stretch occupies residues 130-142; sequence RQRHAEPSRVGEL. Residues 143–238 form a coil 1B region; that stretch reads FQRELRDLRA…QVHDEEVAEL (96 aa). A Phosphoserine modification is found at serine 219. Residues 239–262 form a linker 2 region; sequence LATLQASSQAAAEVDVTVAKPDLT. A coil 2 region spans residues 263–408; the sequence is SALREIRAQY…LLEGEETRFS (146 aa). At lysine 290 the chain carries N6-acetyllysine. The residue at position 335 (serine 335) is a Phosphoserine. The interval 409–499 is tail; it reads TSGLSISGLN…EETTISSQKI (91 aa). The segment at 441–466 is disordered; it reads STGLSLKKEEEEEEASKVASKKTSQI. A phosphoserine mark is found at serine 469 and serine 496.

This sequence belongs to the intermediate filament family. In terms of assembly, forms homodimers (in vitro). Forms heterodimers with NEFL, NEFM or NEFH (in vitro). In terms of processing, O-glycosylated. As to expression, found predominantly in adult CNS.

Class-IV neuronal intermediate filament that is able to self-assemble. It is involved in the morphogenesis of neurons. It may form an independent structural network without the involvement of other neurofilaments or it may cooperate with NEFL to form the filamentous backbone to which NEFM and NEFH attach to form the cross-bridges. May also cooperate with the neuronal intermediate filament protein PRPH to form filamentous networks. This Homo sapiens (Human) protein is Alpha-internexin (INA).